The following is a 354-amino-acid chain: Heat-inducible transcription repressor HrcA (354 aa).

Belongs to the HrcA family.

Functionally, negative regulator of class I heat shock genes (grpE-dnaK-dnaJ and groELS operons). Prevents heat-shock induction of these operons. The protein is Heat-inducible transcription repressor HrcA of Herpetosiphon aurantiacus (strain ATCC 23779 / DSM 785 / 114-95).